Reading from the N-terminus, the 213-residue chain is dITP/XTP pyrophosphatase (213 aa).

Substrate is bound at residue 17 to 22 (SNNAGK). Residue D78 is the Proton acceptor of the active site. Position 78 (D78) interacts with Mg(2+). Substrate-binding positions include S79, 164-167 (FGYD), K187, and 192-193 (HR).

Belongs to the HAM1 NTPase family. In terms of assembly, homodimer. Requires Mg(2+) as cofactor.

It catalyses the reaction XTP + H2O = XMP + diphosphate + H(+). The catalysed reaction is dITP + H2O = dIMP + diphosphate + H(+). It carries out the reaction ITP + H2O = IMP + diphosphate + H(+). Pyrophosphatase that catalyzes the hydrolysis of nucleoside triphosphates to their monophosphate derivatives, with a high preference for the non-canonical purine nucleotides XTP (xanthosine triphosphate), dITP (deoxyinosine triphosphate) and ITP. Seems to function as a house-cleaning enzyme that removes non-canonical purine nucleotides from the nucleotide pool, thus preventing their incorporation into DNA/RNA and avoiding chromosomal lesions. The chain is dITP/XTP pyrophosphatase from Bordetella parapertussis (strain 12822 / ATCC BAA-587 / NCTC 13253).